Here is an 84-residue protein sequence, read N- to C-terminus: Small ribosomal subunit protein uS17 (84 aa).

The protein belongs to the universal ribosomal protein uS17 family. In terms of assembly, part of the 30S ribosomal subunit.

In terms of biological role, one of the primary rRNA binding proteins, it binds specifically to the 5'-end of 16S ribosomal RNA. In Erwinia tasmaniensis (strain DSM 17950 / CFBP 7177 / CIP 109463 / NCPPB 4357 / Et1/99), this protein is Small ribosomal subunit protein uS17.